We begin with the raw amino-acid sequence, 397 residues long: MEKRWKWLKAFIKFVFIQFNQKQTSAMAAELTLSNMLALVPLMTVAVSLMAVFPSFEGVNTQVQALIFDNLMPETGLAVQEHLNEYVSKSKNLSAIGLGFLIVTSLLLMRSIDRSINALWETPTQRKGIHKILAYWAMLTMAPILIAASLAASSYFATLPIVSDLSGILTFGLPFILIVLAFSALYMVVPYTQVRFYKALIAAVITAILFEAAKYGFAIFVTKFSSYELIYGAITAIPIFFLWVYLSWSILLLGVIVCFGLHRFEVESEKHEHEFISVLKILQFFIQAQDKESSLSLEQLKSKFSYLHEQTLRGYLEQLLRLNFLAKLEGEQYCLKLTGHSLTIEEVYRRGNWRLPNNNQALSDEKNDSFSTPIEQANLEMAKALDVELVSTNSVNS.

A run of 6 helical transmembrane segments spans residues 36 to 56 (MLAL…FPSF), 92 to 112 (NLSA…MRSI), 132 to 152 (ILAY…SLAA), 168 to 188 (ILTF…LYMV), 201 to 221 (IAAV…AIFV), and 237 to 257 (IPIF…GVIV).

The protein belongs to the UPF0761 family.

It is found in the cell inner membrane. The chain is UPF0761 membrane protein Kkor_1635 from Kangiella koreensis (strain DSM 16069 / JCM 12317 / KCTC 12182 / SW-125).